We begin with the raw amino-acid sequence, 372 residues long: Invasion protein InvE (372 aa).

The span at 1–19 (MIPGSTSGISFSRILSRQT) shows a compositional bias: polar residues. Residues 1-46 (MIPGSTSGISFSRILSRQTSHQDATQHTDAQQAEIQQAAEDSSPGA) are disordered. A compositionally biased stretch (low complexity) spans 21–40 (HQDATQHTDAQQAEIQQAAE).

It localises to the cell membrane. Functionally, involved in the triggering of intracellular events that lead to microbial internalization. These events include increase in calcium level, redistribution of actin microfilaments, and changes in the normal structure of the microvilli. Encoded within the type III secretion system (SPI-1 T3SS), it is essential for the translocation of protein effectors into host cells. Forms a complex with SipB and SipC in the presence of their chaperone SicA. Positively regulates the secretion of SPI-1 T3SS effector proteins SipB, SipC and SipD and negatively influences the secretion of SipA, SopA and SptP. The protein is Invasion protein InvE (invE) of Salmonella typhimurium (strain LT2 / SGSC1412 / ATCC 700720).